The primary structure comprises 197 residues: dCTP deaminase (197 aa).

DCTP is bound at residue R105–R110. Residue E133 is the Proton donor/acceptor of the active site. Y166 and Q177 together coordinate dCTP. The disordered stretch occupies residues N172–R197. Basic and acidic residues predominate over residues G176–E187.

It belongs to the dCTP deaminase family. In terms of assembly, homotrimer.

The catalysed reaction is dCTP + H2O + H(+) = dUTP + NH4(+). Its pathway is pyrimidine metabolism; dUMP biosynthesis; dUMP from dCTP (dUTP route): step 1/2. Its function is as follows. Catalyzes the deamination of dCTP to dUTP. This Thermomicrobium roseum (strain ATCC 27502 / DSM 5159 / P-2) protein is dCTP deaminase.